We begin with the raw amino-acid sequence, 516 residues long: Exodeoxyribonuclease 7 large subunit (516 aa).

Belongs to the XseA family. In terms of assembly, heterooligomer composed of large and small subunits.

Its subcellular location is the cytoplasm. It carries out the reaction Exonucleolytic cleavage in either 5'- to 3'- or 3'- to 5'-direction to yield nucleoside 5'-phosphates.. In terms of biological role, bidirectionally degrades single-stranded DNA into large acid-insoluble oligonucleotides, which are then degraded further into small acid-soluble oligonucleotides. This Chlamydia trachomatis serovar A (strain ATCC VR-571B / DSM 19440 / HAR-13) protein is Exodeoxyribonuclease 7 large subunit.